Consider the following 95-residue polypeptide: Small ribosomal subunit protein bS6 (95 aa).

Belongs to the bacterial ribosomal protein bS6 family.

Binds together with bS18 to 16S ribosomal RNA. The protein is Small ribosomal subunit protein bS6 of Clostridium beijerinckii (strain ATCC 51743 / NCIMB 8052) (Clostridium acetobutylicum).